Consider the following 253-residue polypeptide: Isoprenyl transferase (253 aa).

Residue D30 is part of the active site. D30 contributes to the Mg(2+) binding site. Substrate-binding positions include 31–34 (GNRR), W35, H51, and 79–81 (STE). N82 serves as the catalytic Proton acceptor. Residues F83, R85, R202, and 208–210 (RVS) contribute to the substrate site. E221 contributes to the Mg(2+) binding site.

Belongs to the UPP synthase family. As to quaternary structure, homodimer. It depends on Mg(2+) as a cofactor.

In terms of biological role, catalyzes the condensation of isopentenyl diphosphate (IPP) with allylic pyrophosphates generating different type of terpenoids. The polypeptide is Isoprenyl transferase (Chlamydia muridarum (strain MoPn / Nigg)).